Here is a 437-residue protein sequence, read N- to C-terminus: Adenylosuccinate synthetase (437 aa).

GTP contacts are provided by residues 25 to 31 (GDEGKGK), 53 to 55 (GHT), and Lys62. Asp26 acts as the Proton acceptor in catalysis. The Mg(2+) site is built by Asp26 and Gly53. Residues 26 to 29 (DEGK) and 51 to 54 (NAGH) each bind IMP. His54 (proton donor) is an active-site residue. Thr141, Arg155, Asn232, and Thr247 together coordinate IMP. Thr307 contributes to the GTP binding site. 307-313 (TTTKRPR) serves as a coordination point for substrate. Residue Arg311 coordinates IMP. Residues Arg313, 339-341 (KLD), and 425-427 (GVG) contribute to the GTP site.

It belongs to the adenylosuccinate synthetase family. Homodimer. Mg(2+) serves as cofactor.

Its subcellular location is the cytoplasm. The catalysed reaction is IMP + L-aspartate + GTP = N(6)-(1,2-dicarboxyethyl)-AMP + GDP + phosphate + 2 H(+). It functions in the pathway purine metabolism; AMP biosynthesis via de novo pathway; AMP from IMP: step 1/2. Functionally, plays an important role in the salvage pathway for purine nucleotide biosynthesis. Catalyzes the first committed step in the biosynthesis of AMP from IMP. The protein is Adenylosuccinate synthetase of Plasmodium knowlesi (strain H).